The following is a 292-amino-acid chain: Probable ABC transporter permease protein YurN (292 aa).

The next 6 helical transmembrane spans lie at 7 to 27 (IIPY…YIPI), 70 to 90 (VLYA…LAAV), 106 to 126 (VFFL…DFIY), 160 to 180 (VIFV…IVSI), 215 to 235 (FVAV…PYIL), and 260 to 280 (MMGY…ALSL). An ABC transmembrane type-1 domain is found at 66 to 282 (LTNNVLYAVI…IITLALSLMQ (217 aa)).

It belongs to the binding-protein-dependent transport system permease family. MalFG subfamily.

The protein localises to the cell membrane. Probably part of the binding-protein-dependent transport system YurMNO. Probably responsible for the translocation of the substrate across the membrane. This chain is Probable ABC transporter permease protein YurN (yurN), found in Bacillus subtilis (strain 168).